A 71-amino-acid chain; its full sequence is General transcription factor IIH subunit 5 (71 aa).

Thr-69 bears the Phosphothreonine mark.

The protein belongs to the TFB5 family. As to quaternary structure, component of the 7-subunit TFIIH core complex composed of XPB/ERCC3, XPD/ERCC2, GTF2H1, GTF2H2, GTF2H3, GTF2H4 and GTF2H5, which is active in NER. The core complex associates with the 3-subunit CDK-activating kinase (CAK) module composed of CCNH/cyclin H, CDK7 and MNAT1 to form the 10-subunit holoenzyme (holo-TFIIH) active in transcription. Part of TBP-based Pol II pre-initiation complex (PIC), in which Pol II core assembles with general transcription factors and other specific initiation factors including GTF2E1, GTF2E2, GTF2F1, GTF2F2, TCEA1, ERCC2, ERCC3, GTF2H2, GTF2H3, GTF2H4, GTF2H5, GTF2A1, GTF2A2, GTF2B and TBP; this large multi-subunit PIC complex mediates DNA unwinding and targets Pol II core to the transcription start site where the first phosphodiester bond forms.

It localises to the nucleus. Its subcellular location is the cytoplasm. Functionally, component of the general transcription and DNA repair factor IIH (TFIIH) core complex, which is involved in general and transcription-coupled nucleotide excision repair (NER) of damaged DNA and, when complexed to CAK, in RNA transcription by RNA polymerase II. In NER, TFIIH acts by opening DNA around the lesion to allow the excision of the damaged oligonucleotide and its replacement by a new DNA fragment. In transcription, TFIIH has an essential role in transcription initiation. When the pre-initiation complex (PIC) has been established, TFIIH is required for promoter opening and promoter escape. Phosphorylation of the C-terminal tail (CTD) of the largest subunit of RNA polymerase II by the kinase module CAK controls the initiation of transcription. Necessary for the stability of the TFIIH complex and for the presence of normal levels of TFIIH in the cell. This Mus musculus (Mouse) protein is General transcription factor IIH subunit 5.